Reading from the N-terminus, the 147-residue chain is uncharacterized protein (147 aa).

The protein to B.subtilis XkdM.

This is an uncharacterized protein from Bacillus subtilis (strain 168).